The chain runs to 567 residues: Low-affinity glucose transporter HXT3 (567 aa).

Residues 1-29 (MNSTPDLISPQKSSENSNADLPSNSSQVM) are compositionally biased toward polar residues. Positions 1–30 (MNSTPDLISPQKSSENSNADLPSNSSQVMN) are disordered. The Cytoplasmic segment spans residues 1–57 (MNSTPDLISPQKSSENSNADLPSNSSQVMNMPEEKGVQDDFQAEADQVLTNPNTGKG). Phosphoserine is present on Ser23. The helical transmembrane segment at 58 to 78 (AYVTVSICCVMVAFGGFVFGW) threads the bilayer. The Extracellular segment spans residues 79-113 (DTGTISGFVAQTDFLRRFGMKHKDGSYYLSKVRTG). A helical transmembrane segment spans residues 114 to 134 (LIVSIFNIGCAIGGIILAKLG). At 135–140 (DMYGRK) the chain is on the cytoplasmic side. Residues 141–161 (MGLIVVVVIYIIGIIIQIASI) form a helical membrane-spanning segment. Residues 162–171 (NKWYQYFIGR) lie on the Extracellular side of the membrane. The helical transmembrane segment at 172-192 (IISGLGVGGIAVLSPMLISEV) threads the bilayer. Residues 193-198 (APKEMR) are Cytoplasmic-facing. The helical transmembrane segment at 199-219 (GTLVSCYQLMITLGIFLGYCT) threads the bilayer. The Extracellular portion of the chain corresponds to 220–233 (NFGTKNYSNSVQWR). N-linked (GlcNAc...) asparagine glycosylation occurs at Asn225. A helical membrane pass occupies residues 234–254 (VPLGLCFAWALFMIGGMTFVP). The Cytoplasmic portion of the chain corresponds to 255–337 (ESPRYLVEAG…IQSLQQLTGD (83 aa)). The helical transmembrane segment at 338–354 (NYFFYYGTTVFNAVGMS) threads the bilayer. Residues 355 to 360 (DSFETS) are Extracellular-facing. The helical transmembrane segment at 361 to 378 (IVFGVVNFFSTCCSLYTV) threads the bilayer. Residues 379–385 (DRFGRRN) are Cytoplasmic-facing. The chain crosses the membrane as a helical span at residues 386 to 406 (CLLYGAIGMVCCYVVYASVGV). The Extracellular segment spans residues 407–428 (TRLWPNGEGNGSSKGAGNCMIV). An N-linked (GlcNAc...) asparagine glycan is attached at Asn416. Residues 429-449 (FACFYIFCFATTWAPIAYVVI) traverse the membrane as a helical segment. Over 450-466 (SETFPLRVKSKAMSIAT) the chain is Cytoplasmic. Residues 467-487 (AANWLWGFLIGFFTPFITGAI) form a helical membrane-spanning segment. Position 488 (Asn488) is a topological domain, extracellular. A helical membrane pass occupies residues 489–509 (FYYGYVFMGCMVFAYFYVFFF). The Cytoplasmic portion of the chain corresponds to 510–567 (VPETKGLTLEEVNDMYAEGVLPWKSASWVPTSQRGANYDADALMHDDQPFYKKMFGKK).

The protein belongs to the major facilitator superfamily. Sugar transporter (TC 2.A.1.1) family.

The protein resides in the membrane. Functionally, low-affinity glucose transporter. The protein is Low-affinity glucose transporter HXT3 (HXT3) of Saccharomyces cerevisiae (strain ATCC 204508 / S288c) (Baker's yeast).